Consider the following 473-residue polypeptide: Aspartyl/glutamyl-tRNA(Asn/Gln) amidotransferase subunit B (473 aa).

This sequence belongs to the GatB/GatE family. GatB subfamily. Heterotrimer of A, B and C subunits.

The catalysed reaction is L-glutamyl-tRNA(Gln) + L-glutamine + ATP + H2O = L-glutaminyl-tRNA(Gln) + L-glutamate + ADP + phosphate + H(+). It carries out the reaction L-aspartyl-tRNA(Asn) + L-glutamine + ATP + H2O = L-asparaginyl-tRNA(Asn) + L-glutamate + ADP + phosphate + 2 H(+). Its function is as follows. Allows the formation of correctly charged Asn-tRNA(Asn) or Gln-tRNA(Gln) through the transamidation of misacylated Asp-tRNA(Asn) or Glu-tRNA(Gln) in organisms which lack either or both of asparaginyl-tRNA or glutaminyl-tRNA synthetases. The reaction takes place in the presence of glutamine and ATP through an activated phospho-Asp-tRNA(Asn) or phospho-Glu-tRNA(Gln). This is Aspartyl/glutamyl-tRNA(Asn/Gln) amidotransferase subunit B from Francisella tularensis subsp. mediasiatica (strain FSC147).